The primary structure comprises 369 residues: Methylthioribose-1-phosphate isomerase (369 aa).

Residues 54–56, Arg-95, and Gln-208 each bind substrate; that span reads RGA. Asp-249 acts as the Proton donor in catalysis. Residue 259-260 participates in substrate binding; it reads NK.

Belongs to the eIF-2B alpha/beta/delta subunits family. MtnA subfamily.

The enzyme catalyses 5-(methylsulfanyl)-alpha-D-ribose 1-phosphate = 5-(methylsulfanyl)-D-ribulose 1-phosphate. It participates in amino-acid biosynthesis; L-methionine biosynthesis via salvage pathway; L-methionine from S-methyl-5-thio-alpha-D-ribose 1-phosphate: step 1/6. Catalyzes the interconversion of methylthioribose-1-phosphate (MTR-1-P) into methylthioribulose-1-phosphate (MTRu-1-P). The sequence is that of Methylthioribose-1-phosphate isomerase from Desulfatibacillum aliphaticivorans.